The chain runs to 178 residues: Translation initiation factor IF-3 (178 aa).

The tract at residues 1-20 is disordered; it reads MRRPFRATPVQKDGPRSNRD.

This sequence belongs to the IF-3 family. In terms of assembly, monomer.

The protein resides in the cytoplasm. IF-3 binds to the 30S ribosomal subunit and shifts the equilibrium between 70S ribosomes and their 50S and 30S subunits in favor of the free subunits, thus enhancing the availability of 30S subunits on which protein synthesis initiation begins. The polypeptide is Translation initiation factor IF-3 (Brucella abortus biovar 1 (strain 9-941)).